The primary structure comprises 242 residues: Vacuole localized DSC protein 1 (242 aa).

Transmembrane regions (helical) follow at residues 128–148 and 152–172; these read PYGFVIMLLIREFTCPVPTAF and LLLVLLDILLLFCQIVIINGS.

Part of the vacuole-localized DSC E3 ligase complex composed of at least TUL1, DSC2, DSC3, UBX3, CDC48 and VLD1.

It is found in the vacuole membrane. Component of the vacuole-localized DSC E3 ubiquitin ligase complex involved in the targeting of the complex to the vacuole membrane via the AP3 pathway to ubiquinate vacuolar membrane proteins. Competes with GLD1 to determine the subcellular localizations of the DSC complex. The protein is Vacuole localized DSC protein 1 of Saccharomyces cerevisiae (strain ATCC 204508 / S288c) (Baker's yeast).